We begin with the raw amino-acid sequence, 354 residues long: Sulfate/thiosulfate import ATP-binding protein CysA 2 (354 aa).

The ABC transporter domain occupies 3 to 237 (IHIQQVNKHF…PSNPFVYEFL (235 aa)). 35–42 (GPSGSGKT) contributes to the ATP binding site.

It belongs to the ABC transporter superfamily. Sulfate/tungstate importer (TC 3.A.1.6) family. As to quaternary structure, the complex is composed of two ATP-binding proteins (CysA), two transmembrane proteins (CysT and CysW) and a solute-binding protein (CysP).

It localises to the cell inner membrane. The catalysed reaction is sulfate(out) + ATP + H2O = sulfate(in) + ADP + phosphate + H(+). It catalyses the reaction thiosulfate(out) + ATP + H2O = thiosulfate(in) + ADP + phosphate + H(+). In terms of biological role, part of the ABC transporter complex CysAWTP involved in sulfate/thiosulfate import. Responsible for energy coupling to the transport system. The chain is Sulfate/thiosulfate import ATP-binding protein CysA 2 from Shewanella oneidensis (strain ATCC 700550 / JCM 31522 / CIP 106686 / LMG 19005 / NCIMB 14063 / MR-1).